The sequence spans 173 residues: Ribosome maturation factor RimM (173 aa).

Positions 102–173 constitute a PRC barrel domain; it reads EGEYYWSDLI…TMLVDWDPEF (72 aa).

The protein belongs to the RimM family. As to quaternary structure, binds ribosomal protein uS19.

Its subcellular location is the cytoplasm. Its function is as follows. An accessory protein needed during the final step in the assembly of 30S ribosomal subunit, possibly for assembly of the head region. Essential for efficient processing of 16S rRNA. May be needed both before and after RbfA during the maturation of 16S rRNA. It has affinity for free ribosomal 30S subunits but not for 70S ribosomes. This is Ribosome maturation factor RimM from Methylobacillus flagellatus (strain ATCC 51484 / DSM 6875 / VKM B-1610 / KT).